The chain runs to 243 residues: Myrosinase MB2 (243 aa).

Asn30 carries N-linked (GlcNAc...) asparagine glycosylation. Tyr51 is a substrate binding site. Residue Glu125 is the Nucleophile of the active site. Residues Trp173 and 180 to 181 (EF) each bind substrate. Asn216 carries an N-linked (GlcNAc...) asparagine glycan.

This sequence belongs to the glycosyl hydrolase 1 family. In terms of assembly, homodimer. In vacuoles called myrosin grains of a certain class of cells, myrosin cells, distributed in the cotyledons and the axis of the embryo as well as in different organs of the growing plant.

It is found in the vacuole. The enzyme catalyses a thioglucoside + H2O = a sugar + a thiol.. Degradation of glucosinolates (glucose residue linked by a thioglucoside bound to an amino acid derivative) to glucose, sulfate and any of the products: thiocyanates, isothiocyanates, nitriles, epithionitriles or oxazolidine-2-thiones. The sequence is that of Myrosinase MB2 from Sinapis alba (White mustard).